Reading from the N-terminus, the 171-residue chain is Co-chaperone protein HscB (171 aa).

Residues 2-74 (DYFTLFGLPA…LTRAEYLLSL (73 aa)) form the J domain.

It belongs to the HscB family. Interacts with HscA and stimulates its ATPase activity. Interacts with IscU.

Its function is as follows. Co-chaperone involved in the maturation of iron-sulfur cluster-containing proteins. Seems to help targeting proteins to be folded toward HscA. This is Co-chaperone protein HscB from Salmonella typhimurium (strain LT2 / SGSC1412 / ATCC 700720).